Here is a 95-residue protein sequence, read N- to C-terminus: Histone-like DNA-binding protein (95 aa).

Belongs to the bacterial histone-like protein family.

The chain is Histone-like DNA-binding protein from Rickettsia rickettsii.